Consider the following 503-residue polypeptide: Probable zinc metalloprotease UREG_01421 (503 aa).

Residues 1 to 24 form the signal peptide; it reads MHSLSSALAGSTFVLLFLCLLASA. Asn-105 is a glycosylation site (N-linked (GlcNAc...) asparagine). 3 residues coordinate Zn(2+): His-176, Asp-196, and Glu-232. An N-linked (GlcNAc...) asparagine glycan is attached at Asn-247. Asp-259 provides a ligand contact to Zn(2+). Residues 416–503 enclose the Fibronectin type-III domain; the sequence is MPRNVRVSTR…RGVAVLPFPA (88 aa). An N-linked (GlcNAc...) asparagine glycan is attached at Asn-429.

The protein belongs to the peptidase M28 family. M28B subfamily. It depends on Zn(2+) as a cofactor.

It localises to the secreted. In Uncinocarpus reesii (strain UAMH 1704), this protein is Probable zinc metalloprotease UREG_01421.